Consider the following 89-residue polypeptide: Small ribosomal subunit protein uS15 (89 aa).

Belongs to the universal ribosomal protein uS15 family. In terms of assembly, part of the 30S ribosomal subunit. Forms a bridge to the 50S subunit in the 70S ribosome, contacting the 23S rRNA.

Its function is as follows. One of the primary rRNA binding proteins, it binds directly to 16S rRNA where it helps nucleate assembly of the platform of the 30S subunit by binding and bridging several RNA helices of the 16S rRNA. Forms an intersubunit bridge (bridge B4) with the 23S rRNA of the 50S subunit in the ribosome. The chain is Small ribosomal subunit protein uS15 from Desulfatibacillum aliphaticivorans.